Reading from the N-terminus, the 335-residue chain is Protein-arginine kinase (335 aa).

Residues 21-244 enclose the Phosphagen kinase C-terminal domain; the sequence is IVMSSRIRLA…NQIIHDEKQI (224 aa). Residues 24-28, H82, R115, 166-170, and 197-202 each bind ATP; these read SSRIR, RASVM, and RGIYGE.

This sequence belongs to the ATP:guanido phosphotransferase family.

It catalyses the reaction L-arginyl-[protein] + ATP = N(omega)-phospho-L-arginyl-[protein] + ADP + H(+). Catalyzes the specific phosphorylation of arginine residues in proteins. This chain is Protein-arginine kinase, found in Staphylococcus aureus (strain Mu3 / ATCC 700698).